We begin with the raw amino-acid sequence, 425 residues long: tRNA(Ile)-lysidine synthase (425 aa).

Residue 37 to 42 (SGGKDS) coordinates ATP.

This sequence belongs to the tRNA(Ile)-lysidine synthase family.

It is found in the cytoplasm. The catalysed reaction is cytidine(34) in tRNA(Ile2) + L-lysine + ATP = lysidine(34) in tRNA(Ile2) + AMP + diphosphate + H(+). Its function is as follows. Ligates lysine onto the cytidine present at position 34 of the AUA codon-specific tRNA(Ile) that contains the anticodon CAU, in an ATP-dependent manner. Cytidine is converted to lysidine, thus changing the amino acid specificity of the tRNA from methionine to isoleucine. The chain is tRNA(Ile)-lysidine synthase from Leptospira borgpetersenii serovar Hardjo-bovis (strain JB197).